Consider the following 886-residue polypeptide: MLGFIKDWLDDNAREIKKLQRVVDEINKLEPEIAAKSDGDLQGMTAVFRDRLDRGESLDGILPEAFAVVREASRRVLGMRHFDVQLMGGIVLHQGRIAEMKTGEGKTLVATLPVYLNALTGKGVHVVTVNDYLARRDSEWMGQVYKYLGLSVGLIVHGLDWEERKRSYRADVTYGTNNEFGFDYLRDNMALHPDQLVQRELNYAIVDEVDSILIDEARTPLIISGQAEKSTDLYYTFARIVPRLVPEVDYNVDEKAHTVVITETGVAKVEKMLGVENLYDDRNIELTHHLNQALKAHALMKRDRDYVVKDGQVIIVDEFTGRLMFGRRYSDGLHQAIEAKEGVKIERESQTLATITFQNYFRMYRKLAGMTGTAATEEQEFKKIYGLDVVVIPTNKPMIRKDLPDVIYKTEQAKFRAVVEEIAARHARGQPVLVGTISIEKSEMLSGMLKKRGIPHQVLNAKYHDKEAEIVAQAGRLGAVTIATNMAGRGTDILLGGNPEFLARNELRRMGHECEAAAEIAGAPAEQDGAYKALLEKFRRQTEEERRRVVELGGLHIIGTERHESRRIDNQLRGRCGRQGDPGSSQFFSSLEDDLMRLFGSENIAGIMDRLGIDEDMPIEHAMITKSIEAAQKRVENRNFDIRKHVLQYDDVMNQQRELIYRQRRQVLTGENLKENVLEMIGTCVERAVNTYAPEGVHPEEWDLKGLLEHAEHLFLPGHGLTAGDLAGMSRRELQEFLTERSRAAYDAREQELGADTMREIERVIMLRIVDEKWMDHLDAMDQLREGIGLRAYGQKDPLVEYKFEGYEMFQNMIASIQDDVVRYIFRVNVVQPQQQRQSRRVVENRYAEEGPKQPARRENKVGRNDPCPCGSGRKYKKCCGRAEAV.

Residues glutamine 85, 103–107, and aspartate 492 contribute to the ATP site; that span reads GEGKT. Residues 841–864 show a composition bias toward basic and acidic residues; the sequence is RVVENRYAEEGPKQPARRENKVGR. The segment at 841-866 is disordered; that stretch reads RVVENRYAEEGPKQPARRENKVGRND. 4 residues coordinate Zn(2+): cysteine 868, cysteine 870, cysteine 879, and cysteine 880.

Belongs to the SecA family. In terms of assembly, monomer and homodimer. Part of the essential Sec protein translocation apparatus which comprises SecA, SecYEG and auxiliary proteins SecDF. Other proteins may also be involved. Requires Zn(2+) as cofactor.

The protein resides in the cell membrane. It localises to the cytoplasm. It carries out the reaction ATP + H2O + cellular proteinSide 1 = ADP + phosphate + cellular proteinSide 2.. Its function is as follows. Part of the Sec protein translocase complex. Interacts with the SecYEG preprotein conducting channel. Has a central role in coupling the hydrolysis of ATP to the transfer of proteins into and across the cell membrane, serving as an ATP-driven molecular motor driving the stepwise translocation of polypeptide chains across the membrane. This Pelotomaculum thermopropionicum (strain DSM 13744 / JCM 10971 / SI) protein is Protein translocase subunit SecA.